We begin with the raw amino-acid sequence, 299 residues long: Acetylglutamate kinase (299 aa).

Residues 72–73 (GG), Arg-94, and Asn-196 contribute to the substrate site.

It belongs to the acetylglutamate kinase family. ArgB subfamily.

Its subcellular location is the cytoplasm. The catalysed reaction is N-acetyl-L-glutamate + ATP = N-acetyl-L-glutamyl 5-phosphate + ADP. Its pathway is amino-acid biosynthesis; L-arginine biosynthesis; N(2)-acetyl-L-ornithine from L-glutamate: step 2/4. Its function is as follows. Catalyzes the ATP-dependent phosphorylation of N-acetyl-L-glutamate. This Burkholderia cenocepacia (strain ATCC BAA-245 / DSM 16553 / LMG 16656 / NCTC 13227 / J2315 / CF5610) (Burkholderia cepacia (strain J2315)) protein is Acetylglutamate kinase.